The following is a 280-amino-acid chain: Chorismate mutase (280 aa).

In terms of domain architecture, Chorismate mutase spans phenylalanine 3 to glutamate 256. L-tyrosine-binding residues include arginine 73, arginine 74, asparagine 137, glycine 139, and serine 140. L-tryptophan-binding residues include asparagine 137, glycine 139, and serine 140.

As to quaternary structure, homodimer.

Its subcellular location is the cytoplasm. The catalysed reaction is chorismate = prephenate. The protein operates within metabolic intermediate biosynthesis; prephenate biosynthesis; prephenate from chorismate: step 1/1. Its activity is regulated as follows. Each dimer has two allosteric binding sites that can bind the regulatory effectors tryptophan or tyrosine. Can bind either one tryptophan or one tyrosine, two tryptophan or two tyrosine or one tryptophan and one tyrosine, which differentially affect the catalytic activity. Activated by tryptophan and subject to feedback inhibition by tyrosine. In the presence of both tryptophan and tyrosine, the enzyme is in the activated state. Its function is as follows. Catalyzes the Claisen rearrangement of chorismate to prephenate. Acts at the first branch point in the aromatic amino acid pathway where it steers biosynthesis towards phenylalanine and tyrosine, and away from tryptophan. The chain is Chorismate mutase from Pichia angusta (Yeast).